We begin with the raw amino-acid sequence, 432 residues long: 5'-deoxyadenosine deaminase (432 aa).

Histidine 63 and histidine 65 together coordinate Zn(2+). Substrate-binding residues include glutamate 92 and histidine 184. Histidine 211 serves as a coordination point for Zn(2+). Substrate is bound by residues glutamate 214 and aspartate 299. A Zn(2+)-binding site is contributed by aspartate 299.

It belongs to the metallo-dependent hydrolases superfamily. MTA/SAH deaminase family. In terms of assembly, homotetramer. The cofactor is Zn(2+).

It catalyses the reaction 5'-deoxyadenosine + H2O + H(+) = 5'-deoxyinosine + NH4(+). The enzyme catalyses S-adenosyl-L-homocysteine + H2O + H(+) = S-inosyl-L-homocysteine + NH4(+). It carries out the reaction S-methyl-5'-thioadenosine + H2O + H(+) = S-methyl-5'-thioinosine + NH4(+). The catalysed reaction is adenosine + H2O + H(+) = inosine + NH4(+). It functions in the pathway amino-acid biosynthesis; S-adenosyl-L-methionine biosynthesis. Its function is as follows. Catalyzes the deamination of three SAM-derived enzymatic products, namely 5'-deoxyadenosine, S-adenosyl-L-homocysteine, and 5'-methylthioadenosine, to produce the inosine analogs. Can also deaminate adenosine. The preferred substrate for this enzyme is 5'-deoxyadenosine, but all these substrates are efficiently deaminated. Likely functions in a S-adenosyl-L-methionine (SAM) recycling pathway from S-adenosyl-L-homocysteine (SAH) produced from SAM-dependent methylation reactions. May also be involved in the recycling of 5'-deoxyadenosine, whereupon the 5'-deoxyribose moiety of 5'-deoxyinosine is further metabolized to deoxyhexoses used for the biosynthesis of aromatic amino acids in methanogens. This chain is 5'-deoxyadenosine deaminase, found in Methanosarcina barkeri (strain Fusaro / DSM 804).